The chain runs to 168 residues: Ribosome maturation factor RimM (168 aa).

The region spanning 95 to 166 (EHEFYYSDII…RIQITPMEGL (72 aa)) is the PRC barrel domain.

Belongs to the RimM family. As to quaternary structure, binds ribosomal protein uS19.

It is found in the cytoplasm. Functionally, an accessory protein needed during the final step in the assembly of 30S ribosomal subunit, possibly for assembly of the head region. Essential for efficient processing of 16S rRNA. May be needed both before and after RbfA during the maturation of 16S rRNA. It has affinity for free ribosomal 30S subunits but not for 70S ribosomes. In Staphylococcus saprophyticus subsp. saprophyticus (strain ATCC 15305 / DSM 20229 / NCIMB 8711 / NCTC 7292 / S-41), this protein is Ribosome maturation factor RimM.